The sequence spans 196 residues: uncharacterized protein (196 aa).

It is found in the mitochondrion. This is an uncharacterized protein from Paramecium tetraurelia.